We begin with the raw amino-acid sequence, 475 residues long: Probable pectate lyase 7 (475 aa).

An N-terminal signal peptide occupies residues 1–24; it reads METARLFKLVCVICIASLIPTIRA. Asn-67 and Asn-96 each carry an N-linked (GlcNAc...) asparagine glycan. The tract at residues 91–117 is disordered; it reads ISSPTNSTRRSLTGRGKGKGKGKWSKL. Ca(2+)-binding residues include Asp-271, Asp-295, and Asp-299. The active site involves Arg-351.

The protein belongs to the polysaccharide lyase 1 family. It depends on Ca(2+) as a cofactor.

The enzyme catalyses Eliminative cleavage of (1-&gt;4)-alpha-D-galacturonan to give oligosaccharides with 4-deoxy-alpha-D-galact-4-enuronosyl groups at their non-reducing ends.. It participates in glycan metabolism; pectin degradation; 2-dehydro-3-deoxy-D-gluconate from pectin: step 2/5. The polypeptide is Probable pectate lyase 7 (Arabidopsis thaliana (Mouse-ear cress)).